A 373-amino-acid chain; its full sequence is 3-dehydroquinate synthase (373 aa).

NAD(+) contacts are provided by residues 120–124 (GVVGD), 144–145 (TT), K157, K166, and 184–187 (FLKT). 3 residues coordinate Zn(2+): E199, H262, and H278.

The protein belongs to the sugar phosphate cyclases superfamily. Dehydroquinate synthase family. NAD(+) is required as a cofactor. The cofactor is Co(2+). Requires Zn(2+) as cofactor.

It is found in the cytoplasm. The enzyme catalyses 7-phospho-2-dehydro-3-deoxy-D-arabino-heptonate = 3-dehydroquinate + phosphate. Its pathway is metabolic intermediate biosynthesis; chorismate biosynthesis; chorismate from D-erythrose 4-phosphate and phosphoenolpyruvate: step 2/7. Functionally, catalyzes the conversion of 3-deoxy-D-arabino-heptulosonate 7-phosphate (DAHP) to dehydroquinate (DHQ). The protein is 3-dehydroquinate synthase of Clostridium tetani (strain Massachusetts / E88).